The chain runs to 435 residues: Glutamyl-tRNA reductase (435 aa).

Substrate-binding positions include Thr-49–Arg-52, Ser-118, Glu-123–Gln-125, and Gln-129. Cys-50 (nucleophile) is an active-site residue. Residue Gly-203–Ile-208 participates in NADP(+) binding.

This sequence belongs to the glutamyl-tRNA reductase family. Homodimer.

The enzyme catalyses (S)-4-amino-5-oxopentanoate + tRNA(Glu) + NADP(+) = L-glutamyl-tRNA(Glu) + NADPH + H(+). The protein operates within porphyrin-containing compound metabolism; protoporphyrin-IX biosynthesis; 5-aminolevulinate from L-glutamyl-tRNA(Glu): step 1/2. Functionally, catalyzes the NADPH-dependent reduction of glutamyl-tRNA(Glu) to glutamate 1-semialdehyde (GSA). This Glaesserella parasuis serovar 5 (strain SH0165) (Haemophilus parasuis) protein is Glutamyl-tRNA reductase.